The sequence spans 35 residues: Ranatuerin-2SPb (35 aa).

C28 and C33 are oxidised to a cystine.

As to expression, expressed by the skin glands.

It localises to the secreted. Antibacterial activity against Gram-positive bacterium S.aureus. Shows no detectable hemolytic activity towards human erythrocytes. The polypeptide is Ranatuerin-2SPb (Lithobates septentrionalis (Mink frog)).